Reading from the N-terminus, the 162-residue chain is Phosphopantetheine adenylyltransferase (162 aa).

Position 10 (Thr10) interacts with substrate. Residues 10–11 (TF) and His18 contribute to the ATP site. Substrate-binding residues include Lys42, Met74, and Arg88. Residues 89–91 (GLR), Glu99, and 124–130 (YAFLSST) contribute to the ATP site.

The protein belongs to the bacterial CoaD family. Homohexamer. Mg(2+) serves as cofactor.

It localises to the cytoplasm. It catalyses the reaction (R)-4'-phosphopantetheine + ATP + H(+) = 3'-dephospho-CoA + diphosphate. It participates in cofactor biosynthesis; coenzyme A biosynthesis; CoA from (R)-pantothenate: step 4/5. Its function is as follows. Reversibly transfers an adenylyl group from ATP to 4'-phosphopantetheine, yielding dephospho-CoA (dPCoA) and pyrophosphate. The polypeptide is Phosphopantetheine adenylyltransferase (Aliivibrio fischeri (strain ATCC 700601 / ES114) (Vibrio fischeri)).